A 209-amino-acid chain; its full sequence is Putative NAD(P)H nitroreductase YdgI (209 aa).

FMN contacts are provided by residues 14 to 16 (RRS), 72 to 74 (QTQ), 161 to 162 (GG), and arginine 199.

This sequence belongs to the nitroreductase family. It depends on FMN as a cofactor.

In Bacillus subtilis (strain 168), this protein is Putative NAD(P)H nitroreductase YdgI (ydgI).